We begin with the raw amino-acid sequence, 174 residues long: Peptide deformylase (174 aa).

Residues C91 and H133 each contribute to the Fe cation site. E134 is a catalytic residue. Position 137 (H137) interacts with Fe cation.

This sequence belongs to the polypeptide deformylase family. Fe(2+) serves as cofactor.

It carries out the reaction N-terminal N-formyl-L-methionyl-[peptide] + H2O = N-terminal L-methionyl-[peptide] + formate. Functionally, removes the formyl group from the N-terminal Met of newly synthesized proteins. Requires at least a dipeptide for an efficient rate of reaction. N-terminal L-methionine is a prerequisite for activity but the enzyme has broad specificity at other positions. The polypeptide is Peptide deformylase (Fusobacterium nucleatum subsp. nucleatum (strain ATCC 25586 / DSM 15643 / BCRC 10681 / CIP 101130 / JCM 8532 / KCTC 2640 / LMG 13131 / VPI 4355)).